The following is a 306-amino-acid chain: UDP-3-O-acyl-N-acetylglucosamine deacetylase (306 aa).

The Zn(2+) site is built by His79, His238, and Asp242. The active-site Proton donor is the His265.

Belongs to the LpxC family. Zn(2+) is required as a cofactor.

It carries out the reaction a UDP-3-O-[(3R)-3-hydroxyacyl]-N-acetyl-alpha-D-glucosamine + H2O = a UDP-3-O-[(3R)-3-hydroxyacyl]-alpha-D-glucosamine + acetate. It functions in the pathway glycolipid biosynthesis; lipid IV(A) biosynthesis; lipid IV(A) from (3R)-3-hydroxytetradecanoyl-[acyl-carrier-protein] and UDP-N-acetyl-alpha-D-glucosamine: step 2/6. Its function is as follows. Catalyzes the hydrolysis of UDP-3-O-myristoyl-N-acetylglucosamine to form UDP-3-O-myristoylglucosamine and acetate, the committed step in lipid A biosynthesis. This is UDP-3-O-acyl-N-acetylglucosamine deacetylase from Shewanella baltica (strain OS223).